Here is a 504-residue protein sequence, read N- to C-terminus: ATP synthase subunit alpha (504 aa).

Residue 169-176 coordinates ATP; the sequence is GDRQTGKT.

This sequence belongs to the ATPase alpha/beta chains family. As to quaternary structure, F-type ATPases have 2 components, CF(1) - the catalytic core - and CF(0) - the membrane proton channel. CF(1) has five subunits: alpha(3), beta(3), gamma(1), delta(1), epsilon(1). CF(0) has three main subunits: a(1), b(2) and c(9-12). The alpha and beta chains form an alternating ring which encloses part of the gamma chain. CF(1) is attached to CF(0) by a central stalk formed by the gamma and epsilon chains, while a peripheral stalk is formed by the delta and b chains.

Its subcellular location is the cell membrane. The catalysed reaction is ATP + H2O + 4 H(+)(in) = ADP + phosphate + 5 H(+)(out). Produces ATP from ADP in the presence of a proton gradient across the membrane. The alpha chain is a regulatory subunit. The chain is ATP synthase subunit alpha from Clostridium botulinum (strain Eklund 17B / Type B).